Reading from the N-terminus, the 128-residue chain is Probable 4-amino-4-deoxy-L-arabinose-phosphoundecaprenol flippase subunit ArnF (128 aa).

The Cytoplasmic segment spans residues Met1–Gly2. Residues Leu3–Ala23 form a helical membrane-spanning segment. Topologically, residues Ala24–Asp35 are periplasmic. Residues Phe36–Gly56 traverse the membrane as a helical segment. Residues Tyr57–Lys75 are Cytoplasmic-facing. Residues Ala76–Gly96 form a helical membrane-spanning segment. Topologically, residues Arg97–Thr100 are periplasmic. Residues Phe101–Leu121 form a helical membrane-spanning segment. Residues Pro122 to Tyr128 are Cytoplasmic-facing.

Belongs to the ArnF family. As to quaternary structure, heterodimer of ArnE and ArnF.

The protein resides in the cell inner membrane. It functions in the pathway bacterial outer membrane biogenesis; lipopolysaccharide biosynthesis. In terms of biological role, translocates 4-amino-4-deoxy-L-arabinose-phosphoundecaprenol (alpha-L-Ara4N-phosphoundecaprenol) from the cytoplasmic to the periplasmic side of the inner membrane. The protein is Probable 4-amino-4-deoxy-L-arabinose-phosphoundecaprenol flippase subunit ArnF of Shigella flexneri serotype 5b (strain 8401).